The following is a 153-amino-acid chain: FAD synthase (153 aa).

Residues 9–10, 14–17, and Asp92 contribute to the ATP site; these read TF and HPGH.

It belongs to the archaeal FAD synthase family. As to quaternary structure, homodimer. Requires a divalent metal cation as cofactor.

It catalyses the reaction FMN + ATP + H(+) = FAD + diphosphate. It participates in cofactor biosynthesis; FAD biosynthesis; FAD from FMN: step 1/1. In terms of biological role, catalyzes the transfer of the AMP portion of ATP to flavin mononucleotide (FMN) to produce flavin adenine dinucleotide (FAD) coenzyme. This chain is FAD synthase, found in Halorubrum lacusprofundi (strain ATCC 49239 / DSM 5036 / JCM 8891 / ACAM 34).